We begin with the raw amino-acid sequence, 130 residues long: MAVKKRAGAKKKEKKVIPVGKAFVQATFNNTIVTLTDLQGNVIAWASCGTAGFKGSRKGTPYAAQMAAQAAARKAAESGLRQVEVLVKGPGSGREAAIRSLQASGINVTAIRDVTPIPHNGCRPPKRRRV.

This sequence belongs to the universal ribosomal protein uS11 family. As to quaternary structure, part of the 30S ribosomal subunit. Interacts with proteins S7 and S18. Binds to IF-3.

Its function is as follows. Located on the platform of the 30S subunit, it bridges several disparate RNA helices of the 16S rRNA. Forms part of the Shine-Dalgarno cleft in the 70S ribosome. The chain is Small ribosomal subunit protein uS11 from Dehalococcoides mccartyi (strain ATCC BAA-2266 / KCTC 15142 / 195) (Dehalococcoides ethenogenes (strain 195)).